A 176-amino-acid polypeptide reads, in one-letter code: Large ribosomal subunit protein eL20 (176 aa).

This sequence belongs to the eukaryotic ribosomal protein eL20 family. In terms of assembly, component of the large ribosomal subunit.

Its subcellular location is the cytoplasm. Component of the large ribosomal subunit. The ribosome is a large ribonucleoprotein complex responsible for the synthesis of proteins in the cell. The polypeptide is Large ribosomal subunit protein eL20 (rpl18a) (Ictalurus punctatus (Channel catfish)).